Consider the following 304-residue polypeptide: tRNA dimethylallyltransferase (304 aa).

10–17 provides a ligand contact to ATP; that stretch reads GPTASGKS. 12 to 17 is a substrate binding site; that stretch reads TASGKS. The segment at 35–38 is interaction with substrate tRNA; sequence DSRQ.

This sequence belongs to the IPP transferase family. As to quaternary structure, monomer. Requires Mg(2+) as cofactor.

The catalysed reaction is adenosine(37) in tRNA + dimethylallyl diphosphate = N(6)-dimethylallyladenosine(37) in tRNA + diphosphate. In terms of biological role, catalyzes the transfer of a dimethylallyl group onto the adenine at position 37 in tRNAs that read codons beginning with uridine, leading to the formation of N6-(dimethylallyl)adenosine (i(6)A). This is tRNA dimethylallyltransferase from Gloeothece citriformis (strain PCC 7424) (Cyanothece sp. (strain PCC 7424)).